Reading from the N-terminus, the 295-residue chain is Methionine aminopeptidase (295 aa).

Residue H63 coordinates substrate. Residues D83, D94, and H154 each contribute to the a divalent metal cation site. H162 contributes to the substrate binding site. The a divalent metal cation site is built by E188 and E281.

The protein belongs to the peptidase M24A family. Methionine aminopeptidase archaeal type 2 subfamily. As to quaternary structure, monomer. Co(2+) is required as a cofactor. Requires Zn(2+) as cofactor. Mn(2+) serves as cofactor. It depends on Fe(2+) as a cofactor.

The catalysed reaction is Release of N-terminal amino acids, preferentially methionine, from peptides and arylamides.. Functionally, removes the N-terminal methionine from nascent proteins. The N-terminal methionine is often cleaved when the second residue in the primary sequence is small and uncharged (Met-Ala-, Cys, Gly, Pro, Ser, Thr, or Val). This is Methionine aminopeptidase from Thermococcus kodakarensis (strain ATCC BAA-918 / JCM 12380 / KOD1) (Pyrococcus kodakaraensis (strain KOD1)).